The chain runs to 153 residues: ATP synthase subunit b' (153 aa).

A helical transmembrane segment spans residues 23 to 40; that stretch reads LMAIQVVALTYILNSLFF.

This sequence belongs to the ATPase B chain family. As to quaternary structure, F-type ATPases have 2 components, F(1) - the catalytic core - and F(0) - the membrane proton channel. F(1) has five subunits: alpha(3), beta(3), gamma(1), delta(1), epsilon(1). F(0) has four main subunits: a(1), b(1), b'(1) and c(10-14). The alpha and beta chains form an alternating ring which encloses part of the gamma chain. F(1) is attached to F(0) by a central stalk formed by the gamma and epsilon chains, while a peripheral stalk is formed by the delta, b and b' chains.

The protein localises to the cellular thylakoid membrane. Functionally, f(1)F(0) ATP synthase produces ATP from ADP in the presence of a proton or sodium gradient. F-type ATPases consist of two structural domains, F(1) containing the extramembraneous catalytic core and F(0) containing the membrane proton channel, linked together by a central stalk and a peripheral stalk. During catalysis, ATP synthesis in the catalytic domain of F(1) is coupled via a rotary mechanism of the central stalk subunits to proton translocation. Its function is as follows. Component of the F(0) channel, it forms part of the peripheral stalk, linking F(1) to F(0). The b'-subunit is a diverged and duplicated form of b found in plants and photosynthetic bacteria. This is ATP synthase subunit b' from Prochlorococcus marinus (strain MIT 9312).